The following is a 511-amino-acid chain: Peptide transporter YePEPT (511 aa).

The Cytoplasmic segment spans residues 1–19; the sequence is MQTSTNTPGGRTFFGHPYP. A helical membrane pass occupies residues 20 to 45; the sequence is LSGLFLSEMWERFSFYGIRPLLILFM. At 46–59 the chain is on the periplasmic side; that stretch reads AATVFDGGMGLPRE. The chain crosses the membrane as a helical span at residues 60–84; it reads QASAIVGIFAGSMYLAALPGGLLAD. Topologically, residues 85-88 are cytoplasmic; that stretch reads NWLG. A helical transmembrane segment spans residues 89 to 109; that stretch reads QQRAVWYGSILIALGHLSIAL. The Periplasmic portion of the chain corresponds to 110–115; it reads SAFFGN. Residues 116 to 138 form a helical membrane-spanning segment; sequence DLFFIGLVFIVLGTGLFKTCISV. Residues 139–149 are Cytoplasmic-facing; that stretch reads MVGTLYKPGDA. Residues 150 to 175 traverse the membrane as a helical segment; sequence RRDGGFSLFYMGINMGSFIAPLLSGW. The Periplasmic portion of the chain corresponds to 176–181; the sequence is LLRTHG. Residues 182 to 208 traverse the membrane as a helical segment; that stretch reads WHWGFGIGGIGMLVALLIFRGFAIPAM. Over 209-232 the chain is Cytoplasmic; the sequence is KRYDAEVGLDSSWNKPTNQRQGVG. A helical membrane pass occupies residues 233 to 253; it reads RWVTAIMAVVVVIIALISQGV. The Periplasmic segment spans residues 254–256; that stretch reads IPI. Residues 257 to 279 form a helical membrane-spanning segment; it reads NPVMIASLLVYVIAASVTLYFIY. Residues 280–294 are Cytoplasmic-facing; it reads LFAFAKMSRKDRARL. The chain crosses the membrane as a helical span at residues 295–321; that stretch reads LVCFILLVSAAFFWSAFEQKPTSFNLF. Residues 322-335 lie on the Periplasmic side of the membrane; the sequence is ANDYTDRMVMGFEI. The helical transmembrane segment at 336–357 threads the bilayer; that stretch reads PTVWFQSINALFIILLAPVFSW. Over 358–369 the chain is Cytoplasmic; sequence AWPALAKKKIQP. The helical transmembrane segment at 370-396 threads the bilayer; the sequence is SSITKFVIGILCAAAGFAVMMYAAQHV. Residues 397-405 lie on the Periplasmic side of the membrane; that stretch reads LSSGGAGVS. Residues 406–426 traverse the membrane as a helical segment; that stretch reads PLWLVMSILLLTLGELCLSPI. Topologically, residues 427–441 are cytoplasmic; sequence GLATMTLLAPDRMRG. The chain crosses the membrane as a helical span at residues 442–462; the sequence is QVMGLWFCASSLGNLAAGLIG. The Periplasmic portion of the chain corresponds to 463-471; the sequence is GHVKADQLD. Residues 472 to 496 traverse the membrane as a helical segment; the sequence is MLPTLFARCSIALVICAAVLILLIV. Topologically, residues 497 to 511 are cytoplasmic; sequence PIRRLMNNTQGQQTA.

This sequence belongs to the major facilitator superfamily. Proton-dependent oligopeptide transporter (POT/PTR) (TC 2.A.17) family.

The protein localises to the cell inner membrane. Its activity is regulated as follows. Transport is inhibited by the proton ionophore carbonyl cyanide m-chlorophenylhydrazone (CCCP). Functionally, mediates the proton-dependent uptake of dipeptides. Shows higher affinity for dipeptides with a negatively charged amino acid residue at the N-terminal position, such as Asp-Ala and Glu-Ala. Also displays specificity for Ala-Ala, Ala-Tyr and Tyr-Ala. The sequence is that of Peptide transporter YePEPT from Yersinia enterocolitica subsp. palearctica serotype O:3 (strain YE-P4).